The sequence spans 506 residues: Maturase K (506 aa).

The protein belongs to the intron maturase 2 family. MatK subfamily.

The protein resides in the plastid. The protein localises to the chloroplast. Functionally, usually encoded in the trnK tRNA gene intron. Probably assists in splicing its own and other chloroplast group II introns. This chain is Maturase K, found in Cytisus scoparius (Scotch broom).